The sequence spans 147 residues: Nucleoside diphosphate kinase (147 aa).

ATP contacts are provided by Lys-9, Phe-57, Arg-85, Thr-91, Arg-102, and Asn-112. Residue His-115 is the Pros-phosphohistidine intermediate of the active site.

This sequence belongs to the NDK family. The cofactor is Mg(2+).

The protein resides in the cytoplasm. It catalyses the reaction a 2'-deoxyribonucleoside 5'-diphosphate + ATP = a 2'-deoxyribonucleoside 5'-triphosphate + ADP. It carries out the reaction a ribonucleoside 5'-diphosphate + ATP = a ribonucleoside 5'-triphosphate + ADP. Its function is as follows. Major role in the synthesis of nucleoside triphosphates other than ATP. The ATP gamma phosphate is transferred to the NDP beta phosphate via a ping-pong mechanism, using a phosphorylated active-site intermediate. This is Nucleoside diphosphate kinase from Thermoplasma volcanium (strain ATCC 51530 / DSM 4299 / JCM 9571 / NBRC 15438 / GSS1).